Here is a 518-residue protein sequence, read N- to C-terminus: Probable protein phosphatase 2C 14 (518 aa).

Composition is skewed to low complexity over residues 1–10 (MVEAAAGRRS) and 86–105 (PQRQ…APGA). 2 disordered regions span residues 1–31 (MVEA…QQHQ) and 86–108 (PQRQ…ADGR). Residues 129–437 (VASLYTLQGK…DDCAVVCLFL (309 aa)) enclose the PPM-type phosphatase domain. The Mn(2+) site is built by aspartate 165 and glycine 166. The disordered stretch occupies residues 192–222 (TDEGRQTSTSSIKSNGDETGSPGNMGRDAEQ). Residues 197–213 (QTSTSSIKSNGDETGSP) show a composition bias toward polar residues. Residues aspartate 382 and aspartate 428 each contribute to the Mn(2+) site.

The protein belongs to the PP2C family. It depends on Mg(2+) as a cofactor. Mn(2+) serves as cofactor.

The enzyme catalyses O-phospho-L-seryl-[protein] + H2O = L-seryl-[protein] + phosphate. The catalysed reaction is O-phospho-L-threonyl-[protein] + H2O = L-threonyl-[protein] + phosphate. In Oryza sativa subsp. japonica (Rice), this protein is Probable protein phosphatase 2C 14.